The chain runs to 113 residues: uncharacterized protein (113 aa).

The protein resides in the cytoplasm. It is found in the nucleus. This is an uncharacterized protein from Saccharomyces cerevisiae (strain ATCC 204508 / S288c) (Baker's yeast).